The primary structure comprises 274 residues: 3',5'-cyclic adenosine monophosphate phosphodiesterase CpdA (274 aa).

Residues Asp21, His23, Asp63, Asn93, His163, His202, and His204 each contribute to the Fe cation site. AMP is bound by residues His23, Asp63, and 93-94 (NH). His204 lines the AMP pocket.

This sequence belongs to the cyclic nucleotide phosphodiesterase class-III family. Fe(2+) is required as a cofactor.

It carries out the reaction 3',5'-cyclic AMP + H2O = AMP + H(+). In terms of biological role, hydrolyzes cAMP to 5'-AMP. Plays an important regulatory role in modulating the intracellular concentration of cAMP, thereby influencing cAMP-dependent processes. The chain is 3',5'-cyclic adenosine monophosphate phosphodiesterase CpdA from Vibrio vulnificus (strain CMCP6).